The following is a 137-amino-acid chain: Small ribosomal subunit protein bS6 (137 aa).

Positions 113-137 are disordered; it reads EEQREKKNFRKPFIKREEAATKENK. A compositionally biased stretch (basic and acidic residues) spans 126 to 137; that stretch reads IKREEAATKENK.

The protein belongs to the bacterial ribosomal protein bS6 family.

In terms of biological role, binds together with bS18 to 16S ribosomal RNA. This is Small ribosomal subunit protein bS6 from Mycoplasma capricolum subsp. capricolum (strain California kid / ATCC 27343 / NCTC 10154).